A 683-amino-acid polypeptide reads, in one-letter code: DNA-directed RNA polymerase subunit beta' (683 aa).

Zn(2+)-binding residues include Cys-69, Cys-71, Cys-87, and Cys-90. The Mg(2+) site is built by Asp-489, Asp-491, and Asp-493.

The protein belongs to the RNA polymerase beta' chain family. RpoC1 subfamily. In plastids the minimal PEP RNA polymerase catalytic core is composed of four subunits: alpha, beta, beta', and beta''. When a (nuclear-encoded) sigma factor is associated with the core the holoenzyme is formed, which can initiate transcription. It depends on Mg(2+) as a cofactor. Requires Zn(2+) as cofactor.

It is found in the plastid. The protein resides in the chloroplast. The enzyme catalyses RNA(n) + a ribonucleoside 5'-triphosphate = RNA(n+1) + diphosphate. Functionally, DNA-dependent RNA polymerase catalyzes the transcription of DNA into RNA using the four ribonucleoside triphosphates as substrates. The protein is DNA-directed RNA polymerase subunit beta' of Saccharum hybrid (Sugarcane).